An 874-amino-acid polypeptide reads, in one-letter code: Alanine--tRNA ligase (874 aa).

4 residues coordinate Zn(2+): His564, His568, Cys665, and His669.

The protein belongs to the class-II aminoacyl-tRNA synthetase family. Requires Zn(2+) as cofactor.

The protein resides in the cytoplasm. The enzyme catalyses tRNA(Ala) + L-alanine + ATP = L-alanyl-tRNA(Ala) + AMP + diphosphate. Functionally, catalyzes the attachment of alanine to tRNA(Ala) in a two-step reaction: alanine is first activated by ATP to form Ala-AMP and then transferred to the acceptor end of tRNA(Ala). Also edits incorrectly charged Ser-tRNA(Ala) and Gly-tRNA(Ala) via its editing domain. The protein is Alanine--tRNA ligase of Burkholderia pseudomallei (strain 1106a).